The following is a 200-amino-acid chain: NADH-quinone oxidoreductase subunit C (200 aa).

It belongs to the complex I 30 kDa subunit family. As to quaternary structure, NDH-1 is composed of 14 different subunits. Subunits NuoB, C, D, E, F, and G constitute the peripheral sector of the complex.

It is found in the cell inner membrane. It catalyses the reaction a quinone + NADH + 5 H(+)(in) = a quinol + NAD(+) + 4 H(+)(out). In terms of biological role, NDH-1 shuttles electrons from NADH, via FMN and iron-sulfur (Fe-S) centers, to quinones in the respiratory chain. The immediate electron acceptor for the enzyme in this species is believed to be ubiquinone. Couples the redox reaction to proton translocation (for every two electrons transferred, four hydrogen ions are translocated across the cytoplasmic membrane), and thus conserves the redox energy in a proton gradient. The sequence is that of NADH-quinone oxidoreductase subunit C from Paraburkholderia phytofirmans (strain DSM 17436 / LMG 22146 / PsJN) (Burkholderia phytofirmans).